A 119-amino-acid chain; its full sequence is Mitochondrial zinc maintenance protein 1, mitochondrial (119 aa).

A mitochondrion-targeting transit peptide spans 1-15 (MSTSSRALAAYRNAL).

It belongs to the complex I LYR family. MZM1 subfamily. As to quaternary structure, interacts with RIP1.

The protein localises to the mitochondrion matrix. Its function is as follows. Assembly factor required for Rieske Fe-S protein RIP1 incorporation into the cytochrome b-c1 (CIII) complex. Functions as a chaperone, binding to this subunit within the mitochondrial matrix and stabilizing it prior to its translocation and insertion into the late CIII dimeric intermediate within the mitochondrial inner membrane. Modulates the mitochondrial matrix zinc pool. The polypeptide is Mitochondrial zinc maintenance protein 1, mitochondrial (MZM1) (Eremothecium gossypii (strain ATCC 10895 / CBS 109.51 / FGSC 9923 / NRRL Y-1056) (Yeast)).